We begin with the raw amino-acid sequence, 55 residues long: Large ribosomal subunit protein bL33 (55 aa).

Belongs to the bacterial ribosomal protein bL33 family.

This Vibrio atlanticus (strain LGP32) (Vibrio splendidus (strain Mel32)) protein is Large ribosomal subunit protein bL33.